The chain runs to 664 residues: Macrolide export ATP-binding/permease protein MacB (664 aa).

An ABC transporter domain is found at 8–245; the sequence is LELVDVHRTY…AGPSVPLTLD (238 aa). ATP is bound at residue 44 to 51; it reads GSSGSGKS. A run of 4 helical transmembrane segments spans residues 283-303, 543-563, 602-622, and 627-647; these read LLSV…MALG, GAIA…IMLV, IIGI…AGWA, and IVSI…FGLW.

Belongs to the ABC transporter superfamily. Macrolide exporter (TC 3.A.1.122) family. In terms of assembly, homodimer.

It localises to the cell inner membrane. Functionally, non-canonical ABC transporter that contains transmembrane domains (TMD), which form a pore in the inner membrane, and an ATP-binding domain (NBD), which is responsible for energy generation. Confers resistance against macrolides. The chain is Macrolide export ATP-binding/permease protein MacB from Chlorobium luteolum (strain DSM 273 / BCRC 81028 / 2530) (Pelodictyon luteolum).